We begin with the raw amino-acid sequence, 661 residues long: Zinc finger protein 81 (661 aa).

In terms of domain architecture, KRAB spans 21 to 92 (VSFEDVTVDF…EGEAPHQSCS (72 aa)). A Glycyl lysine isopeptide (Lys-Gly) (interchain with G-Cter in SUMO2) cross-link involves residue K266. 12 C2H2-type zinc fingers span residues 330–352 (YICT…EKTH), 358–380 (YKCN…QTTH), 386–408 (FECS…QKIH), 414–436 (HKCS…QRIH), 442–464 (YICT…QRIH), 470–492 (YECS…KRIH), 498–520 (YICT…QKSH), 526–548 (YICA…QTIH), 554–576 (YVCA…QRIH), 582–604 (YKCP…QRIH), 610–632 (YICA…QTIH), and 638–660 (YKCS…RNIH).

This sequence belongs to the krueppel C2H2-type zinc-finger protein family.

Its subcellular location is the nucleus. Its function is as follows. May be involved in transcriptional regulation. In Homo sapiens (Human), this protein is Zinc finger protein 81 (ZNF81).